A 318-amino-acid polypeptide reads, in one-letter code: Inner membrane protein YbhN (318 aa).

Residues 1 to 13 (MSKSHPRWRLAKK) are Periplasmic-facing. Residues 14 to 34 (ILTWLFFIAVIVLLVVYAKKV) form a helical membrane-spanning segment. The Cytoplasmic segment spans residues 35 to 50 (DWEEVWKVIRDYNRVA). The helical transmembrane segment at 51–71 (LLSAVGLVVVSYLIYGCYDLL) threads the bilayer. The Periplasmic portion of the chain corresponds to 72-85 (ARFYCGHKLAKRQV). The helical transmembrane segment at 86-106 (MLVSFICYAFNLTLSTWVGGI) threads the bilayer. The Cytoplasmic segment spans residues 107–125 (GMRYRLYSRLGLPGSTITR). Residues 126 to 146 (IFSLSITTNWLGYILLAGIIF) traverse the membrane as a helical segment. The Periplasmic segment spans residues 147–165 (TAGVVELPDHWYVDQTTLR). A helical transmembrane segment spans residues 166-186 (ILGIGLLMIIAVYLWFCAFAK). Residues 187 to 205 (HRHMTIKGQKLVLPSWKFA) are Cytoplasmic-facing. The helical transmembrane segment at 206–226 (LAQMLISSVNWMVMGAIIWLL) threads the bilayer. Residues 227–233 (LGQSVNY) are Periplasmic-facing. Helical transmembrane passes span 234–254 (FFVL…HIPA) and 255–275 (GIGV…TSKG). The Periplasmic portion of the chain corresponds to 276–277 (TI). The helical transmembrane segment at 278 to 298 (IAALLAYRVLYYFIPLLLALI) threads the bilayer. Over 299–318 (CYLLLESQAKKLRAKNEAAM) the chain is Cytoplasmic.

It to Synechocystis PCC 6803 slr0712.

It is found in the cell inner membrane. The sequence is that of Inner membrane protein YbhN (ybhN) from Escherichia coli (strain K12).